The chain runs to 322 residues: Stage V sporulation protein K (322 aa).

99–106 (GNPGTGKT) is a binding site for ATP.

It belongs to the CbxX/CfxQ family.

The polypeptide is Stage V sporulation protein K (spoVK) (Bacillus subtilis (strain 168)).